Here is a 390-residue protein sequence, read N- to C-terminus: Putative methylesterase 11, chloroplastic (390 aa).

A chloroplast-targeting transit peptide spans 1–46 (MGNLCSLFTPPKPVKKRKPITKRQSSIGASSSGSGLNSNRWNNRVR). Disordered stretches follow at residues 1–52 (MGNL…SSRR) and 94–119 (QGSCSKKNQLPRSSSSRSRSSTDPLL). Residues 25 to 48 (SSIGASSSGSGLNSNRWNNRVRSS) are compositionally biased toward low complexity. Residues 94-104 (QGSCSKKNQLP) show a composition bias toward polar residues. Low complexity predominate over residues 105–114 (RSSSSRSRSS). The AB hydrolase-1 domain occupies 137-241 (NHFVLVHGGS…KAVFLAAAML (105 aa)). Asp213 functions as the Acyl-ester intermediate in the catalytic mechanism. Residues Asp339 and His367 each act as charge relay system in the active site.

This sequence belongs to the AB hydrolase superfamily. Methylesterase family.

Its subcellular location is the plastid. The protein localises to the chloroplast. Functionally, putative methylesterase. The chain is Putative methylesterase 11, chloroplastic from Arabidopsis thaliana (Mouse-ear cress).